A 1144-amino-acid polypeptide reads, in one-letter code: Ribonucleoside-diphosphate reductase large subunit (1144 aa).

Residues 1-33 (MANRPAASALAGARSPSERQEPREPEVAPPGGD) are disordered. Over residues 16 to 26 (PSERQEPREPE) the composition is skewed to basic and acidic residues. The short motif at 55 to 75 (AYRISDSSFVQCGSNCSMIID) is the RIP homotypic interaction motif (RHIM) element. The disordered stretch occupies residues 118–324 (SGPSATTSVG…TDPGYPVPLE (207 aa)). Over residues 119-132 (GPSATTSVGTQTSG) the composition is skewed to polar residues. The segment covering 141–159 (TPEPQGPQAVPPPPPPPFP) has biased composition (pro residues). Residues 164–179 (CCARRDARGGAEKDVG) show a composition bias toward basic and acidic residues. Residues 192–204 (SETEDSDSSDEDT) are compositionally biased toward acidic residues. Low complexity-rich tracts occupy residues 205-216 (GSGSETLSRSSS) and 279-305 (GSAT…DVAP). Residues Thr573, 588-589 (SC), Gly619, 798-802 (NLCTE), and 975-979 (PTAAS) contribute to the substrate site. A disulfide bond links Cys589 and Cys815. Catalysis depends on Asn798, which acts as the Proton acceptor. The active-site Cysteine radical intermediate is the Cys800. Glu802 (proton acceptor) is an active-site residue.

Belongs to the ribonucleoside diphosphate reductase large chain family. In terms of assembly, heterotetramer composed of a homodimer of the large subunit (R1) and a homodimer of the small subunit (R2). Larger multisubunit protein complex are also active, composed of (R1)n(R2)n. May self-assemble (via RIP homotypic interaction motif/RHIM) into homomeric fibrillar amyloid structures. Interacts (via RHIM) with human RIPK1 (via RHIM). Interacts (via RHIM) with human RIPK3 (via RHIM). May interact (via RHIM) with human ZBP1 (via RHIM). Interacts (via C-terminus) with host CASP8.

It carries out the reaction a 2'-deoxyribonucleoside 5'-diphosphate + [thioredoxin]-disulfide + H2O = a ribonucleoside 5'-diphosphate + [thioredoxin]-dithiol. In terms of biological role, ribonucleoside-diphosphate reductase holoenzyme that provides the precursors necessary for viral DNA synthesis. Allows virus growth in non-dividing cells, as well as reactivation from latency in infected hosts. Catalyzes the biosynthesis of deoxyribonucleotides from the corresponding ribonucleotides. The N-terminal region confers antiapoptotic activity in differentiated cells such as neurons and is important for viral reactivation to increase neural survivability. Prevents host necroptosis by targeting host RIPK1 and RIPK3, thereby hampering the formation of necroptotic RIPK1-RIPK3 complexes. May form hetero-amyloid structures with host proteins RIPK3 or ZBP1, thereby preventing RIPK3- and ZBP1-mediated necroptosis. In addition, inhibits extrinsic apoptosis by targeting host CASP8. This Homo sapiens (Human) protein is Ribonucleoside-diphosphate reductase large subunit.